The primary structure comprises 209 residues: Ubiquinone biosynthesis protein COQ4 homolog 2, mitochondrial (209 aa).

Zn(2+) is bound by residues His-118, Asp-119, His-122, and Glu-134.

This sequence belongs to the COQ4 family. In terms of assembly, component of a multi-subunit COQ enzyme complex. Zn(2+) serves as cofactor.

It is found in the mitochondrion inner membrane. The enzyme catalyses a 4-hydroxy-3-methoxy-5-(all-trans-polyprenyl)benzoate + H(+) = a 2-methoxy-6-(all-trans-polyprenyl)phenol + CO2. It participates in cofactor biosynthesis; ubiquinone biosynthesis. Its function is as follows. Lyase that catalyzes the C1-decarboxylation of 4-hydroxy-3-methoxy-5-(all-trans-polyprenyl)benzoic acid into 2-methoxy-6-(all-trans-polyprenyl)phenol during ubiquinone biosynthesis. In Paramecium tetraurelia, this protein is Ubiquinone biosynthesis protein COQ4 homolog 2, mitochondrial.